The following is a 573-amino-acid chain: Excitatory amino acid transporter 2 (573 aa).

Polar residues predominate over residues 1–11; it reads MASTEGANNMP. Residues 1-29 form a disordered region; the sequence is MASTEGANNMPKQVEVRMHDSHLSSEEPK. The Cytoplasmic portion of the chain corresponds to 1–44; the sequence is MASTEGANNMPKQVEVRMHDSHLSSEEPKHRNLGMRMCDKLGKN. A phosphoserine mark is found at Ser-3, Ser-21, Ser-24, and Ser-25. Residues 14 to 29 show a composition bias toward basic and acidic residues; the sequence is VEVRMHDSHLSSEEPK. Cys-38 carries the S-palmitoyl cysteine lipid modification. 3 consecutive transmembrane segments (helical) span residues 45–64, 88–108, and 121–142; these read LLLS…GGLL, MLKM…LSGL, and MVYY…VLAI. 2 N-linked (GlcNAc...) asparagine glycosylation sites follow: Asn-205 and Asn-215. Transmembrane regions (helical) follow at residues 235-258, 268-295, and 317-338; these read FKDG…MGKM, FFNI…ACLI, and ITVI…YFVV. Positions 344-374 form an intramembrane region, discontinuously helical; sequence FSFFAGIFQAWITALGTASSAGTLPVTFRCL. 361-363 is an L-aspartate binding site; that stretch reads ASS. The chain crosses the membrane as a helical span at residues 384-410; the sequence is VTRFVLPVGATINMDGTALYEAVAAIF. Positions 392, 394, and 396 each coordinate Na(+). L-aspartate is bound by residues Thr-400, 441-445, Asp-474, and Asn-481; that span reads IPSAG. The discontinuously helical intramembrane region spans 424 to 457; that stretch reads IVTVSLTATLASIGAASIPSAGLVTMLLILTAVG. A helical transmembrane segment spans residues 471–492; it reads WLLDRMRTSVNVVGDSFGAGIV. 2 residues coordinate Na(+): Asn-481 and Asp-485. Phosphoserine occurs at positions 505, 520, 531, and 533. Phosphotyrosine is present on Tyr-538. Phosphoserine occurs at positions 543, 559, and 563.

It belongs to the dicarboxylate/amino acid:cation symporter (DAACS) (TC 2.A.23) family. SLC1A2 subfamily. In terms of assembly, homotrimer. Interacts with AJUBA. Glycosylated. Post-translationally, palmitoylation at Cys-38 is not required for correct subcellular localization, but is important for glutamate uptake activity. In terms of tissue distribution, localized in brain and is highly enriched in the Purkinje cell layer in cerebellum.

It is found in the cell membrane. It carries out the reaction K(+)(in) + L-glutamate(out) + 3 Na(+)(out) + H(+)(out) = K(+)(out) + L-glutamate(in) + 3 Na(+)(in) + H(+)(in). The enzyme catalyses D-aspartate(out) + K(+)(in) + 3 Na(+)(out) + H(+)(out) = D-aspartate(in) + K(+)(out) + 3 Na(+)(in) + H(+)(in). The catalysed reaction is K(+)(in) + L-aspartate(out) + 3 Na(+)(out) + H(+)(out) = K(+)(out) + L-aspartate(in) + 3 Na(+)(in) + H(+)(in). Its function is as follows. Sodium-dependent, high-affinity amino acid transporter that mediates the uptake of L-glutamate and also L-aspartate and D-aspartate. Functions as a symporter that transports one amino acid molecule together with two or three Na(+) ions and one proton, in parallel with the counter-transport of one K(+) ion. Mediates Cl(-) flux that is not coupled to amino acid transport; this avoids the accumulation of negative charges due to aspartate and Na(+) symport. Essential for the rapid removal of released glutamate from the synaptic cleft, and for terminating the postsynaptic action of glutamate. In Rattus norvegicus (Rat), this protein is Excitatory amino acid transporter 2 (Slc1a2).